The chain runs to 383 residues: Omega-6 fatty acid desaturase, endoplasmic reticulum isozyme 2 (383 aa).

The next 3 membrane-spanning stretches (helical) occupy residues 61 to 81 (TIAFCLYYVATHYFHLLPGPL), 85 to 105 (GMAIYWAVQGCILTGVWVIAH), and 117 to 137 (LLDDIVGLILHSALLVPYFSW). The short motif at 105-109 (HECGH) is the Histidine box-1 element. A Histidine box-2 motif is present at residues 141–145 (HRRHH). The next 3 membrane-spanning stretches (helical) occupy residues 179-199 (VLTLAVTLTLGWPLYLALNVS), 225-245 (IYISDAGVLAVVYGLFRLAMA), and 249-269 (AWVVCVYGVPLLVVNGFLVLI). Positions 315 to 319 (HVAHH) match the Histidine box-3 motif.

The protein belongs to the fatty acid desaturase type 1 family.

Its subcellular location is the endoplasmic reticulum membrane. Its pathway is lipid metabolism; polyunsaturated fatty acid biosynthesis. Functionally, ER (microsomal) omega-6 fatty acid desaturase introduces the second double bond in the biosynthesis of 18:3 fatty acids, important constituents of plant membranes. It is thought to use cytochrome b5 as an electron donor and to act on fatty acids esterified to phosphatidylcholine and, possibly, other phospholipids. The protein is Omega-6 fatty acid desaturase, endoplasmic reticulum isozyme 2 (FAD2-2) of Glycine max (Soybean).